The primary structure comprises 150 residues: UPF0756 membrane protein HD_1071 (150 aa).

4 helical membrane-spanning segments follow: residues 1–21 (MSLQ…LGVL), 52–72 (YGLT…IVSG), 82–102 (ILSW…WLGG), and 114–134 (IITG…GIPV).

Belongs to the UPF0756 family.

It is found in the cell membrane. The chain is UPF0756 membrane protein HD_1071 from Haemophilus ducreyi (strain 35000HP / ATCC 700724).